We begin with the raw amino-acid sequence, 637 residues long: MTYHFTEEYDIIVIGAGHAGVEASLAASRMGCKVLLATINIEMLAFMPCNPSIGGSAKGIVVREVDALGGEMAKTIDKTYIQMKMLNTGKGPAVRALRAQADKELYSKEMRKTVENQENLTLRQTMIDEILVEDGKVVGVRTATHQEYAAKAVIVTTGTALRGEIIIGDLKYSSGPNHSLASINLADNLKELGLEIGRFKTGTPPRVKASSINYDVTEIQPGDEVPNHFSYTSRDEDYVKDQVPCWLTYTNGTSHEIIQNNLHRAPMFTGVVKGVGPRYCPSIEDKIVRFADKERHQLFLEPEGRNTEEVYVQGLSTSLPEDVQRDLVHSIKGLENAEMMRTGYAIEYDMVLPHQLRATLETKKISGLFTAGQTNGTSGYEEAAGQGIIAGINAALKIQGKPELILKRSDGYIGVMIDDLVTKGTIEPYRLLTSRAEYRLILRHDNADMRLTEMGREIGLVDDERWARFEIKKNQFDNEMKRLDSIKLKPVKETNAKVEEMGFKPLTDAVTAKEFLRRPEVSYQDVVAFIGPAAEDLDDKIIELIETEIKYEGYISKAMDQVAKMKRMEEKRIPANIDWDDIDSIATEARQKFKLINPETIGQASRISGVNPADISILMVYLEGKNRSISKTLQKSK.

FAD contacts are provided by residues 15–20, isoleucine 127, and serine 182; that span reads GAGHAG. An NAD(+)-binding site is contributed by 276 to 290; the sequence is GPRYCPSIEDKIVRF. Glutamine 373 lines the FAD pocket.

It belongs to the MnmG family. In terms of assembly, homodimer. Heterotetramer of two MnmE and two MnmG subunits. It depends on FAD as a cofactor.

It localises to the cytoplasm. In terms of biological role, NAD-binding protein involved in the addition of a carboxymethylaminomethyl (cmnm) group at the wobble position (U34) of certain tRNAs, forming tRNA-cmnm(5)s(2)U34. The chain is tRNA uridine 5-carboxymethylaminomethyl modification enzyme MnmG from Streptococcus pneumoniae serotype 4 (strain ATCC BAA-334 / TIGR4).